The chain runs to 367 residues: Cycloaraneosene synthase sdnA (367 aa).

The first 24 residues, 1–24 (MSLYGLFTLATSYLPSVGGGAALA), serve as a signal peptide directing secretion. Mg(2+) is bound by residues aspartate 115, asparagine 260, and serine 264. The short motif at 115 to 119 (DDQFD) is the DDXXD motif element. Asparagine 276 is a glycosylation site (N-linked (GlcNAc...) asparagine).

The protein belongs to the terpene synthase family. It depends on Mg(2+) as a cofactor.

It catalyses the reaction (2E,6E,10E)-geranylgeranyl diphosphate = cycloaraneosene + diphosphate. The protein operates within antibiotic biosynthesis. Cycloaraneosene synthase; part of the gene cluster that mediates the biosynthesis of sordarin and hypoxysordarin, glycoside antibiotics with a unique tetracyclic diterpene aglycone structure. First, the geranylgeranyl diphosphate synthase sdnC constructs GGDP from farnesyl diphosphate and isopentenyl diphosphate. The diterpene cyclase sdnA then catalyzes the cyclization of GGDP to afford cycloaraneosene. Cycloaraneosene is then hydroxylated four times by the putative cytochrome P450 monooxygenases sdnB, sdnE, sdnF and sdnH to give a hydroxylated cycloaraneosene derivative such as cycloaraneosene-8,9,13,19-tetraol. Although the order of the hydroxylations is unclear, at least C8, C9 and C13 of the cycloaraneosene skeleton are hydroxylated before the sordaricin formation. Dehydration of the 13-hydroxy group of the hydroxylated cycloaraneosene derivative might be catalyzed by an unassigned hypothetical protein such as sdnG and sdnP to construct the cyclopentadiene moiety. The FAD-dependent oxidoreductase sdnN is proposed to catalyze the oxidation at C9 of the hydroxylated cycloaraneosene derivative and also catalyze the Baeyer-Villiger oxidation to give the lactone intermediate. The presumed lactone intermediate would be hydrolyzed to give an acrolein moiety and a carboxylate moiety. Then, [4+2]cycloaddition would occur between the acrolein moiety and the cyclopentadiene moiety to give sordaricin. SdnN might also be involved in the [4+2]cycloaddition after the hypothesized oxidation to accommodate the oxidized product and prompt the [4+2]cycloaddition. GDP-6-deoxy-D-altrose may be biosynthesized from GDP-D-mannose by the putative GDP-mannose-4,6-dehydratase sdnI and the short-chain dehydrogenase sdnK. The glycosyltransferase sdnJ catalyzes the attachment of 6-deoxy-D-altrose onto the 19-hydroxy group of sordaricin to give 4'-O-demethylsordarin. The methyltransferase sdnD would complete the biosynthesis of sordarin. Sordarin can be further modified into hypoxysordarin. The unique acyl chain at the 3'-hydroxy group of hypoxysordarin would be constructed by an iterative type I PKS sdnO and the trans-acting polyketide methyltransferase sdnL. SdnL would be responsible for the introduction of an alpha-methyl group of the polyketide chain. Alternatively, the beta-lactamase-like protein sdnR might be responsible for the cleavage and transfer of the polyketide chain from the PKS sdnO to sordarin. Two putative cytochrome P450 monooxygenases, sdnQ and sdnT, might catalyze the epoxidations of the polyketide chain to complete the biosynthesis of hypoxysordarin. Transcriptional regulators sdnM and sdnS are presumably encoded for the transcriptional regulation of the expression of the sdn gene cluster. This is Cycloaraneosene synthase sdnA from Sordaria araneosa (Pleurage araneosa).